The following is a 159-amino-acid chain: Keratin-associated protein 9-8 (159 aa).

15 repeat units span residues 8-12 (CCQPT), 13-17 (CCRTT), 32-36 (CCQPS), 37-41 (CCVSS), 46-50 (CCRPT), 51-55 (CCQNT), 56-60 (CCQPI), 65-69 (CCQPS), 70-74 (CCSTP), 75-79 (CCQPT), 80-84 (CCGQT), 129-133 (CCRPA), 134-138 (CCETT), 139-142 (CCRT), and 153-157 (CCQPS). Residues 8-157 (CCQPTCCRTT…TCVSSCCQPS (150 aa)) form a 15 X 5 AA repeats of C-C-[RQVSGE]-[SPSNQ]-[TASPI] region.

It belongs to the KRTAP type 9 family. As to quaternary structure, interacts with hair keratins.

Functionally, in the hair cortex, hair keratin intermediate filaments are embedded in an interfilamentous matrix, consisting of hair keratin-associated proteins (KRTAP), which are essential for the formation of a rigid and resistant hair shaft through their extensive disulfide bond cross-linking with abundant cysteine residues of hair keratins. The matrix proteins include the high-sulfur and high-glycine-tyrosine keratins. The chain is Keratin-associated protein 9-8 (KRTAP9-8) from Homo sapiens (Human).